Reading from the N-terminus, the 871-residue chain is Alanine--tRNA ligase (871 aa).

Zn(2+) contacts are provided by histidine 561, histidine 565, cysteine 665, and histidine 669.

It belongs to the class-II aminoacyl-tRNA synthetase family. The cofactor is Zn(2+).

The protein localises to the cytoplasm. The enzyme catalyses tRNA(Ala) + L-alanine + ATP = L-alanyl-tRNA(Ala) + AMP + diphosphate. Catalyzes the attachment of alanine to tRNA(Ala) in a two-step reaction: alanine is first activated by ATP to form Ala-AMP and then transferred to the acceptor end of tRNA(Ala). Also edits incorrectly charged Ser-tRNA(Ala) and Gly-tRNA(Ala) via its editing domain. In Dehalococcoides mccartyi (strain CBDB1), this protein is Alanine--tRNA ligase.